The following is a 121-amino-acid chain: Auxin-responsive protein SAUR32 (121 aa).

This sequence belongs to the ARG7 family. As to expression, expressed in roots, leaves and stems.

The protein resides in the nucleus. It localises to the cytoplasm. Functionally, may play a role in the apical hook development. This chain is Auxin-responsive protein SAUR32, found in Arabidopsis thaliana (Mouse-ear cress).